A 99-amino-acid polypeptide reads, in one-letter code: ATP synthase subunit c (99 aa).

The next 2 membrane-spanning stretches (helical) occupy residues 23–43 (GAGI…IGAL) and 78–98 (MGIA…LIFV).

The protein belongs to the ATPase C chain family. As to quaternary structure, F-type ATPases have 2 components, F(1) - the catalytic core - and F(0) - the membrane proton channel. F(1) has five subunits: alpha(3), beta(3), gamma(1), delta(1), epsilon(1). F(0) has three main subunits: a(1), b(2) and c(10-14). The alpha and beta chains form an alternating ring which encloses part of the gamma chain. F(1) is attached to F(0) by a central stalk formed by the gamma and epsilon chains, while a peripheral stalk is formed by the delta and b chains.

It localises to the cell membrane. F(1)F(0) ATP synthase produces ATP from ADP in the presence of a proton or sodium gradient. F-type ATPases consist of two structural domains, F(1) containing the extramembraneous catalytic core and F(0) containing the membrane proton channel, linked together by a central stalk and a peripheral stalk. During catalysis, ATP synthesis in the catalytic domain of F(1) is coupled via a rotary mechanism of the central stalk subunits to proton translocation. Functionally, key component of the F(0) channel; it plays a direct role in translocation across the membrane. A homomeric c-ring of between 10-14 subunits forms the central stalk rotor element with the F(1) delta and epsilon subunits. In Mycoplasma mobile (strain ATCC 43663 / 163K / NCTC 11711) (Mesomycoplasma mobile), this protein is ATP synthase subunit c.